Here is a 256-residue protein sequence, read N- to C-terminus: Imidazole glycerol phosphate synthase subunit HisF (256 aa).

Residues D11 and D130 contribute to the active site.

Belongs to the HisA/HisF family. In terms of assembly, heterodimer of HisH and HisF.

Its subcellular location is the cytoplasm. It catalyses the reaction 5-[(5-phospho-1-deoxy-D-ribulos-1-ylimino)methylamino]-1-(5-phospho-beta-D-ribosyl)imidazole-4-carboxamide + L-glutamine = D-erythro-1-(imidazol-4-yl)glycerol 3-phosphate + 5-amino-1-(5-phospho-beta-D-ribosyl)imidazole-4-carboxamide + L-glutamate + H(+). It functions in the pathway amino-acid biosynthesis; L-histidine biosynthesis; L-histidine from 5-phospho-alpha-D-ribose 1-diphosphate: step 5/9. Functionally, IGPS catalyzes the conversion of PRFAR and glutamine to IGP, AICAR and glutamate. The HisF subunit catalyzes the cyclization activity that produces IGP and AICAR from PRFAR using the ammonia provided by the HisH subunit. In Prochlorococcus marinus (strain AS9601), this protein is Imidazole glycerol phosphate synthase subunit HisF.